Reading from the N-terminus, the 456-residue chain is Glycosyl hydrolase family 109 protein 2 (456 aa).

The segment at residues 1-33 (MSGFDRRSFLKASMVTAAATALAACASSERATG) is a signal peptide (tat-type signal). Residues 63 to 64 (ER), aspartate 85, 134 to 137 (WAWH), 154 to 155 (EV), and asparagine 183 contribute to the NAD(+) site. Residues tyrosine 212, arginine 231, 243-246 (YPTH), and tyrosine 325 each bind substrate. Residue tyrosine 243 coordinates NAD(+).

Belongs to the Gfo/Idh/MocA family. Glycosyl hydrolase 109 subfamily. The cofactor is NAD(+). Predicted to be exported by the Tat system. The position of the signal peptide cleavage has not been experimentally proven.

In terms of biological role, glycosidase. The chain is Glycosyl hydrolase family 109 protein 2 from Shewanella sp. (strain MR-4).